Here is a 183-residue protein sequence, read N- to C-terminus: Secreted RxLR effector protein 41 (183 aa).

The signal sequence occupies residues 1–18 (MLGFVTGVLAISAHVIVS). The short motif at 41–65 (RRLRSYETDTASARAEEGTSDIEER) is the RxLR-dEER element. The N-linked (GlcNAc...) asparagine glycan is linked to Asn-88.

Belongs to the RxLR effector family.

The protein localises to the secreted. Its subcellular location is the host nucleus. It localises to the host cytoplasm. In terms of biological role, secreted effector that dos not suppress the host cell death induced by cell death-inducing proteins. In Plasmopara viticola (Downy mildew of grapevine), this protein is Secreted RxLR effector protein 41.